Here is a 208-residue protein sequence, read N- to C-terminus: Glycerol-3-phosphate acyltransferase 1 (208 aa).

A run of 5 helical transmembrane segments spans residues 52–72 (VVLM…YLLI), 77–97 (WVIL…WLDF), 112–132 (FLLP…LVFI), 140–160 (IALA…YGSH), and 161–181 (SEFA…KFVL).

This sequence belongs to the PlsY family. As to quaternary structure, probably interacts with PlsX.

It localises to the cell membrane. The enzyme catalyses an acyl phosphate + sn-glycerol 3-phosphate = a 1-acyl-sn-glycero-3-phosphate + phosphate. The protein operates within lipid metabolism; phospholipid metabolism. Catalyzes the transfer of an acyl group from acyl-phosphate (acyl-PO(4)) to glycerol-3-phosphate (G3P) to form lysophosphatidic acid (LPA). This enzyme utilizes acyl-phosphate as fatty acyl donor, but not acyl-CoA or acyl-ACP. In Dehalococcoides mccartyi (strain ATCC BAA-2266 / KCTC 15142 / 195) (Dehalococcoides ethenogenes (strain 195)), this protein is Glycerol-3-phosphate acyltransferase 1.